The following is a 116-amino-acid chain: Co-chaperonin GroES (116 aa).

This sequence belongs to the GroES chaperonin family. As to quaternary structure, heptamer of 7 subunits arranged in a ring. Interacts with the chaperonin GroEL.

It localises to the cytoplasm. Together with the chaperonin GroEL, plays an essential role in assisting protein folding. The GroEL-GroES system forms a nano-cage that allows encapsulation of the non-native substrate proteins and provides a physical environment optimized to promote and accelerate protein folding. GroES binds to the apical surface of the GroEL ring, thereby capping the opening of the GroEL channel. This chain is Co-chaperonin GroES, found in Mycoplasma pneumoniae (strain ATCC 29342 / M129 / Subtype 1) (Mycoplasmoides pneumoniae).